A 371-amino-acid chain; its full sequence is Dihydroorotate dehydrogenase (quinone) (371 aa).

Residues A79 to K83 and T103 each bind FMN. K83 provides a ligand contact to substrate. N128–F132 serves as a coordination point for substrate. Positions 156 and 189 each coordinate FMN. N189 is a binding site for substrate. The active-site Nucleophile is S192. Residue N194 coordinates substrate. The FMN site is built by K225 and T253. Residue N254–T255 coordinates substrate. Residues G279, G308, and Y329–T330 each bind FMN.

The protein belongs to the dihydroorotate dehydrogenase family. Type 2 subfamily. Monomer. It depends on FMN as a cofactor.

It is found in the cell membrane. The enzyme catalyses (S)-dihydroorotate + a quinone = orotate + a quinol. It functions in the pathway pyrimidine metabolism; UMP biosynthesis via de novo pathway; orotate from (S)-dihydroorotate (quinone route): step 1/1. Its function is as follows. Catalyzes the conversion of dihydroorotate to orotate with quinone as electron acceptor. This is Dihydroorotate dehydrogenase (quinone) from Corynebacterium glutamicum (strain R).